Consider the following 387-residue polypeptide: Carbamoyl phosphate synthase small chain (387 aa).

The tract at residues 1-189 (MIKSAILVLE…GLPEDKQEQD (189 aa)) is CPSase. Residues Ser47, Gly241, and Gly243 each contribute to the L-glutamine site. Positions 193–380 (HVVAYDFGAK…IELIEQYCQK (188 aa)) constitute a Glutamine amidotransferase type-1 domain. The active-site Nucleophile is the Cys269. L-glutamine contacts are provided by Leu270, Gln273, Asn311, Gly313, and Phe314. Residues His353 and Glu355 contribute to the active site.

Belongs to the CarA family. As to quaternary structure, composed of two chains; the small (or glutamine) chain promotes the hydrolysis of glutamine to ammonia, which is used by the large (or ammonia) chain to synthesize carbamoyl phosphate. Tetramer of heterodimers (alpha,beta)4.

The catalysed reaction is hydrogencarbonate + L-glutamine + 2 ATP + H2O = carbamoyl phosphate + L-glutamate + 2 ADP + phosphate + 2 H(+). It carries out the reaction L-glutamine + H2O = L-glutamate + NH4(+). It participates in amino-acid biosynthesis; L-arginine biosynthesis; carbamoyl phosphate from bicarbonate: step 1/1. The protein operates within pyrimidine metabolism; UMP biosynthesis via de novo pathway; (S)-dihydroorotate from bicarbonate: step 1/3. Functionally, small subunit of the glutamine-dependent carbamoyl phosphate synthetase (CPSase). CPSase catalyzes the formation of carbamoyl phosphate from the ammonia moiety of glutamine, carbonate, and phosphate donated by ATP, constituting the first step of 2 biosynthetic pathways, one leading to arginine and/or urea and the other to pyrimidine nucleotides. The small subunit (glutamine amidotransferase) binds and cleaves glutamine to supply the large subunit with the substrate ammonia. The polypeptide is Carbamoyl phosphate synthase small chain (Photorhabdus laumondii subsp. laumondii (strain DSM 15139 / CIP 105565 / TT01) (Photorhabdus luminescens subsp. laumondii)).